Reading from the N-terminus, the 177-residue chain is Acireductone dioxygenase (177 aa).

4 residues coordinate Fe(2+): His-99, His-101, Glu-105, and His-143. Positions 99, 101, 105, and 143 each coordinate Ni(2+).

Belongs to the acireductone dioxygenase (ARD) family. Monomer. It depends on Fe(2+) as a cofactor. Requires Ni(2+) as cofactor.

It catalyses the reaction 1,2-dihydroxy-5-(methylsulfanyl)pent-1-en-3-one + O2 = 3-(methylsulfanyl)propanoate + CO + formate + 2 H(+). The enzyme catalyses 1,2-dihydroxy-5-(methylsulfanyl)pent-1-en-3-one + O2 = 4-methylsulfanyl-2-oxobutanoate + formate + 2 H(+). Its pathway is amino-acid biosynthesis; L-methionine biosynthesis via salvage pathway; L-methionine from S-methyl-5-thio-alpha-D-ribose 1-phosphate: step 5/6. Catalyzes 2 different reactions between oxygen and the acireductone 1,2-dihydroxy-3-keto-5-methylthiopentene (DHK-MTPene) depending upon the metal bound in the active site. Fe-containing acireductone dioxygenase (Fe-ARD) produces formate and 2-keto-4-methylthiobutyrate (KMTB), the alpha-ketoacid precursor of methionine in the methionine recycle pathway. Ni-containing acireductone dioxygenase (Ni-ARD) produces methylthiopropionate, carbon monoxide and formate, and does not lie on the methionine recycle pathway. The polypeptide is Acireductone dioxygenase (Leptospira borgpetersenii serovar Hardjo-bovis (strain L550)).